The following is a 1187-amino-acid chain: MNHSQQVPSRDQLLAKTGVLLIVDQITPPSGPVAKGVTPTVKERELALFIAVSDDGMVYAFNGHVDLGTGIRTSLAQIVAEELDLRMDQVHMVLGDTERAPNQGATIASATLQISAVPLRKAAATARRYLLQQAALRLGCPPEMLRIEDGTVIASNGSTLSFAELVQGKNHQLHIADDAPLKAIEDYRLVGRSAPRVDIPGKATGELTYVHDMRLPNMLHGRVIRPPYAGHDSGDFVGNSLLAVDESSIAHLPGVVAVVVIRDFVGVVAEREEQAIRAAHELKVSWKPFTGKLPDLSDVAQAIRDNPRVQRTVLDQGDVDGGIANASQRLSRSYLWPYQLHASIGPSCALADFTAGQIRVWSGTQNPHLLRADLAWLLACDEARIEIIRMEAAGCYGRNCADDVCADAVLLSRAVQRPVRVQLTREQEHVWEPKGTAQLMEIDGGLNADGSVAAYDFQTSYPSNGAPTLALLLTGAVEPVPALFEMGDRTSIPPYDYEHMRVTINDMTPLVRASWMRGVSAMPNSFAHESYIDELAFAAGVDPVEYRLKHLSDPRAIDLVKATAERAQWQPHTRPMQTQAEGDVLRGRGFAYARYIHSKFPGFGAAWAAWVADVAVDRRTGEVAVTRVVIGHDAGMMVNPEGVRHQIHGNVIQSTSRVLKEQVSFEESTVASKEWGGYPILTFPELPAIDVMMLPRQHEPPMGSGESASVPSAAAIANAIFDATGIRFRELPITAERVRAALGGEGQGPDAPAPAQPSTKRSKWWFGSLAGVFGAALGMLATALPWRAEIAPVTPPGVGSWSAAMLERGRQVAAAGDCAVCHTVSGGKANAGGLAMDTPFGTLYSTNITPDPETGIGRWSFAAFERAMREGISRDGRHLYPAFPYTSFRNINDADMQALYAYLMSQTPVRQEAPANQMRFPFNQRPLMAGWNARFLQRGEYQPDPQRSAQWNRGAYLVDGLGHCTACHSPRNLMGAEKGGSSYLAGGMVDGWEAPALNALGKSSTPWSEDELFNYLSTGFSEKHGVAAGPMGPVVSELATLPKSDVRAIAHYLSSLEGEPQALAANAAPQVDTHVSLSNGERVFKGACLGCHSDGLGPKLFGVSPSMAVNSNVHSDLPDNLLRVVLHGIPTPATRDLGYMPGFKDSLSDRQVADLAAYLRHRFAADKPAWQGLASKAAQVRANPGSH.

The helical transmembrane segment at 764-784 (WWFGSLAGVFGAALGMLATAL) threads the bilayer. 3 consecutive Cytochrome c domains span residues 804–907 (AMLE…MSQT), 949–1057 (AQWN…SSLE), and 1075–1163 (VSLS…RHRF). Positions 818, 821, 822, 964, 967, 968, 1088, 1091, and 1092 each coordinate heme c.

It depends on Mo-molybdopterin cytosine dinucleotide as a cofactor.

The protein localises to the membrane. The enzyme catalyses 2 Fe(III)-[cytochrome] + nicotinate + H2O = 2 Fe(II)-[cytochrome] + 6-hydroxynicotinate + 2 H(+). It functions in the pathway cofactor degradation; nicotinate degradation. Subunit of the two-component enzyme NicAB that mediates nicotinate hydroxylation, the first step in the aerobic nicotinate degradation pathway. Mediates conversion of nicotinate into 6-hydroxynicotinate (6HNA). The polypeptide is Nicotinate dehydrogenase subunit B (nicB) (Pseudomonas putida (strain ATCC 47054 / DSM 6125 / CFBP 8728 / NCIMB 11950 / KT2440)).